The following is a 212-amino-acid chain: MITTDLFTRGWIFIRGVPAMKFLPPEGPPEIAFAGRSNVGKSSLINALVNQKGLARTSNTPGRTQELNYFVPDGFSGEGADLPPMALVDMPGYGYATAPKEKVDEWTKLVFDYLKGRVTLKRVYVLIDARHGIKAKDDEVLSLLDKAAVSYQIVLTKTDKIKVAGVPRLIEETLQKIKKRPAAFPFVLATSSEKGEGLEELQAAIVLAANGG.

Residues 27 to 211 form the EngB-type G domain; sequence GPPEIAFAGR…QAAIVLAANG (185 aa). GTP is bound by residues 35–42, 62–66, 89–92, 156–159, and 190–192; these read GRSNVGKS, GRTQE, DMPG, TKTD, and TSS. Positions 42 and 64 each coordinate Mg(2+).

Belongs to the TRAFAC class TrmE-Era-EngA-EngB-Septin-like GTPase superfamily. EngB GTPase family. It depends on Mg(2+) as a cofactor.

Necessary for normal cell division and for the maintenance of normal septation. This chain is Probable GTP-binding protein EngB, found in Mesorhizobium japonicum (strain LMG 29417 / CECT 9101 / MAFF 303099) (Mesorhizobium loti (strain MAFF 303099)).